Reading from the N-terminus, the 201-residue chain is Molybdenum cofactor guanylyltransferase (201 aa).

GTP contacts are provided by residues 14–16, Lys-31, and Asp-104; that span reads LAG. Position 104 (Asp-104) interacts with Mg(2+).

The protein belongs to the MobA family. In terms of assembly, monomer. It depends on Mg(2+) as a cofactor.

It localises to the cytoplasm. The enzyme catalyses Mo-molybdopterin + GTP + H(+) = Mo-molybdopterin guanine dinucleotide + diphosphate. In terms of biological role, transfers a GMP moiety from GTP to Mo-molybdopterin (Mo-MPT) cofactor (Moco or molybdenum cofactor) to form Mo-molybdopterin guanine dinucleotide (Mo-MGD) cofactor. In Helicobacter pylori (strain P12), this protein is Molybdenum cofactor guanylyltransferase.